The primary structure comprises 519 residues: Glutamate--cysteine ligase (519 aa).

It belongs to the glutamate--cysteine ligase type 1 family. Type 1 subfamily.

The enzyme catalyses L-cysteine + L-glutamate + ATP = gamma-L-glutamyl-L-cysteine + ADP + phosphate + H(+). It participates in sulfur metabolism; glutathione biosynthesis; glutathione from L-cysteine and L-glutamate: step 1/2. The chain is Glutamate--cysteine ligase from Edwardsiella ictaluri (strain 93-146).